We begin with the raw amino-acid sequence, 499 residues long: MQDQYILALDQGTTSSRAMLFDRNGNVVSVAQKEFRQIYPHPGWVEHDPLEIWATQAGVAAEAVTHAGLNGTSIAAIGITNQRETTIVWDRQTGHPIYNAIVWQDRRTADFCDQLKAQGLEDEVRAKTGLPVDSYFSATKIRWILDNVEGAREKAKQGKLAFGTVDSWLVWNFTKHELHITDVTNASRTMLFNIHTLQWDDALLDALDIPRSMLPEVRPSSEVYGPTKTTVFASKIPLAGIAGDQHAALFGQMCTRSGMVKNTYGTGCFLVMNTGTKPIESKNNLVTTIAWQIGDQINYALEGSIFIAGAVVQWLRDGLGIIRSASEVETLARGVEHCDGVYLVPAFAGLGAPHWNARARGTLFGVTRGTTSAHIARAALDSIAYQSMDVLKAMEADSGIHINELRVDGGACANNLLMQFQADILGVDAVRPQVSETTALGAAYLAGLATGYWKDIEELQNQWKLEHRFSPSLPADQAKACLDGWQRAIRAAKAWADAP.

Thr13 lines the ADP pocket. Thr13, Thr14, and Ser15 together coordinate ATP. Position 13 (Thr13) interacts with sn-glycerol 3-phosphate. Arg17 is a binding site for ADP. Residues Arg83, Glu84, Tyr135, and Asp244 each contribute to the sn-glycerol 3-phosphate site. Residues Arg83, Glu84, Tyr135, Asp244, and Gln245 each coordinate glycerol. Thr266 and Gly309 together coordinate ADP. Thr266, Gly309, Gln313, and Gly410 together coordinate ATP. ADP contacts are provided by Gly410 and Asn414.

Belongs to the FGGY kinase family.

The catalysed reaction is glycerol + ATP = sn-glycerol 3-phosphate + ADP + H(+). It functions in the pathway polyol metabolism; glycerol degradation via glycerol kinase pathway; sn-glycerol 3-phosphate from glycerol: step 1/1. Inhibited by fructose 1,6-bisphosphate (FBP). Key enzyme in the regulation of glycerol uptake and metabolism. Catalyzes the phosphorylation of glycerol to yield sn-glycerol 3-phosphate. This Paraburkholderia phymatum (strain DSM 17167 / CIP 108236 / LMG 21445 / STM815) (Burkholderia phymatum) protein is Glycerol kinase.